The sequence spans 1430 residues: Caskin-1 (1430 aa).

6 ANK repeats span residues 48 to 77 (DGFS…AVDI), 81 to 110 (KGMR…AVNV), 114 to 143 (EGHI…NPCI), 147 to 176 (SGKT…CAAL), 188 to 217 (NGTS…DINR), and 220 to 249 (KSGT…NAQV). Phosphotyrosine is present on Y253. The SH3 domain occupies 281 to 347 (SAALQVRATK…PSSLGEAIVK (67 aa)). Residues 348-372 (RAGSRTGSEPSPPQGGGSLGPSAPP) are disordered. Position 358 is a phosphoserine (S358). Positions 375-471 (IWVLRKPFAG…PKKLESSSAS (97 aa)) are CASK-binding. The residue at position 398 (R398) is an Omega-N-methylarginine. Positions 421–430 (QKSVSESSPG) are enriched in polar residues. The tract at residues 421 to 472 (QKSVSESSPGDSPVKPPEGSSGAARSQPPAAHAGQVYGEQPPKKLESSSASE) is disordered. A phosphoserine mark is found at S423 and S432. 2 SAM domains span residues 474–537 (KSAE…LNIP) and 543–607 (HKPA…LAEL). 2 positions are modified to phosphoserine: S635 and S648. Low complexity predominate over residues 667–679 (LSGPAEAGAAAAE). 4 disordered regions span residues 667 to 1001 (LSGP…SAGS), 1015 to 1040 (GGGG…DPGR), 1055 to 1371 (GPDG…RQKL), and 1388 to 1407 (KIRQ…EKST). Over residues 683–711 (NHLPATPRTTSRQESSLSGRARHMSSSQE) the composition is skewed to polar residues. S722 and S727 each carry phosphoserine. The residue at position 740 (T740) is a Phosphothreonine. Position 790 is a phosphoserine (S790). Residues 847–859 (PPAPGPVPPPVPA) are compositionally biased toward pro residues. Residues S890, S892, and S988 each carry the phosphoserine modification. The segment covering 1027 to 1036 (GHPTPRPASP) has biased composition (pro residues). T1066 bears the Phosphothreonine mark. S1068 is modified (phosphoserine). Residues 1147–1159 (DTVKRRPKAKEPD) show a composition bias toward basic and acidic residues. Over residues 1190-1214 (PELPPPPPPAEPPPTDLMPLPPLPL) the composition is skewed to pro residues. Phosphoserine is present on S1258. T1267 carries the phosphothreonine modification. The segment covering 1267 to 1282 (TPPPVSPKPPPPPTAP) has biased composition (pro residues). 3 stretches are compositionally biased toward low complexity: residues 1283–1298 (KPAK…SATP), 1308–1326 (PPAA…SASP), and 1344–1358 (PRAA…PVAS). S1362 carries the post-translational modification Phosphoserine. The segment covering 1388-1406 (KIRQEDGQGPRPSSIEEKS) has biased composition (basic and acidic residues).

In terms of assembly, polymerizes, via the tandem SAM domains, to form long, 8 nM wide fibers, upon which other proteins can assemble. Binds the CaM kinase domain of CASK. Forms a ternary complex with CASK and LIN7A, LIN7B or LIN7C. Competes with APBA1 that forms a similar complex with CASK and LIN7 proteins. The tripartite complex CASKIN1/CASK/LIN7(A/B/C) binds the cytoplasmic tail of NRXN1. In terms of tissue distribution, expressed in brain. Localized primarily to the neuropil and enriched in synaptic areas (at protein level).

Its subcellular location is the cytoplasm. May link the scaffolding protein CASK to downstream intracellular effectors. The polypeptide is Caskin-1 (Caskin1) (Rattus norvegicus (Rat)).